The primary structure comprises 338 residues: Fructose-1,6-bisphosphatase class 1 (338 aa).

Mg(2+) is bound by residues glutamate 94, aspartate 116, leucine 118, and aspartate 119. Substrate-binding positions include aspartate 119–serine 122, asparagine 210, and lysine 276. Residue glutamate 282 coordinates Mg(2+).

This sequence belongs to the FBPase class 1 family. In terms of assembly, homotetramer. The cofactor is Mg(2+).

The protein resides in the cytoplasm. It carries out the reaction beta-D-fructose 1,6-bisphosphate + H2O = beta-D-fructose 6-phosphate + phosphate. The protein operates within carbohydrate biosynthesis; gluconeogenesis. The polypeptide is Fructose-1,6-bisphosphatase class 1 (Burkholderia thailandensis (strain ATCC 700388 / DSM 13276 / CCUG 48851 / CIP 106301 / E264)).